Reading from the N-terminus, the 446-residue chain is Histidine--tRNA ligase (446 aa).

The protein belongs to the class-II aminoacyl-tRNA synthetase family. Homodimer.

It is found in the cytoplasm. It catalyses the reaction tRNA(His) + L-histidine + ATP = L-histidyl-tRNA(His) + AMP + diphosphate + H(+). The protein is Histidine--tRNA ligase of Paraburkholderia xenovorans (strain LB400).